The primary structure comprises 283 residues: 4-diphosphocytidyl-2-C-methyl-D-erythritol kinase (283 aa).

K9 is an active-site residue. Position 93-103 (93-103 (PIAAGLAGGSS)) interacts with ATP. D135 is an active-site residue.

Belongs to the GHMP kinase family. IspE subfamily.

The catalysed reaction is 4-CDP-2-C-methyl-D-erythritol + ATP = 4-CDP-2-C-methyl-D-erythritol 2-phosphate + ADP + H(+). The protein operates within isoprenoid biosynthesis; isopentenyl diphosphate biosynthesis via DXP pathway; isopentenyl diphosphate from 1-deoxy-D-xylulose 5-phosphate: step 3/6. Functionally, catalyzes the phosphorylation of the position 2 hydroxy group of 4-diphosphocytidyl-2C-methyl-D-erythritol. In Macrococcus caseolyticus (strain JCSC5402) (Macrococcoides caseolyticum), this protein is 4-diphosphocytidyl-2-C-methyl-D-erythritol kinase.